Here is a 308-residue protein sequence, read N- to C-terminus: Olfactory receptor 5K1 (308 aa).

Over 1–25 (MAEENHTMKNEFILTGFTDHPELKT) the chain is Extracellular. Residue Asn-5 is glycosylated (N-linked (GlcNAc...) asparagine). A helical transmembrane segment spans residues 26 to 46 (LLFVVFFAIYLITVVGNISLV). The Cytoplasmic segment spans residues 47-54 (ALIFTHRR). Residues 55–75 (LHTPMYIFLGNLALVDSCCAC) form a helical membrane-spanning segment. At 76–99 (AITPKMLENFFSENKRISLYECAV) the chain is on the extracellular side. Cysteines 97 and 189 form a disulfide. Residues 100–120 (QFYFLCTVETADCFLLAAMAY) traverse the membrane as a helical segment. The Cytoplasmic segment spans residues 121-139 (DRYVAICNPLQYHIMMSKK). A helical transmembrane segment spans residues 140-160 (LCIQMTTGAFIAGNLHSMIHV). Topologically, residues 161-196 (GLVFRLVFCGSNHINHFYCDILPLYRLSCVDPYINE) are extracellular. Residues 197–217 (LVLFIFSGSVQVFTIGSVLIS) traverse the membrane as a helical segment. Over 218–237 (YLYILLTIFKMKSKEGRAKA) the chain is Cytoplasmic. The helical transmembrane segment at 238–258 (FSTCASHFLSVSLFYGSLFFM) threads the bilayer. The Extracellular segment spans residues 259–271 (YVRPNLLEEGDKD). Residues 272–292 (IPAAILFTIVVPLLNPFIYSL) traverse the membrane as a helical segment. Residues 293–308 (RNREVISVLRKILMKK) lie on the Cytoplasmic side of the membrane.

The protein belongs to the G-protein coupled receptor 1 family.

The protein localises to the cell membrane. In terms of biological role, odorant receptor. This chain is Olfactory receptor 5K1 (OR5K1), found in Homo sapiens (Human).